The primary structure comprises 723 residues: MIYQAETLQVKEVQDGIAELSFCSPKSVNKLDLATLESLDKALDALKAHQGLKGLMLTSDKDAFIVGADITEFLGLFAKTDAELDQWLQFANSIFNKLEDLPVPTISVLKGHTLGGGCECVLATDMRIGDKTTSIGLPETKLGIMPGFGGCVRLPRVIGADSAMEVITQGKACRADEALKIGLLDAVVDSDALYESALKTLTSAINEKLDWQARRKQKTSPLTLSKLESMMSFTMAKGLVAQKAGPHYPAPMTAVITIEEGARFARNEALDIERKHFVKLAKSEEAKSLVGLFLNDQYIKGLAKKSAKSASKDTQRAAVLGAGIMGGGIAYQSALKGVPVLMKDIAQPSLDLGMTEASKLLNKRLSRGRIDGFKMAGILASITPSLHYTGIEESDVIVEAVVENPKVKAAVLSEVESHVGEDTVITSNTSTIPINLLAKSLKRPENFCGMHFFNPVHRMPLVEIIRGEHTSDETINRVVAYAAKMGKSPIVVNDCPGFFVNRVLFPYFGGFSMLLRDGADFTKIDKIMERKFGWPMGPAYLLDVVGIDTAHHAQAVMAQGFPERMGKQGRDAIDALFEASKYGQKNGSGFYSYTIDRKGKPKKTFSEEILPVLADVCTDKQDFDDQTIIQRMMIPMINEVVLCLQEGIIATPQEADMTLVYGLGFPPFRGGVFRYLDSVGIAEFVAMAKQYSELGAMYQVPQMLIDMAAKGESFYGAQQQGSI.

The tract at residues 1–189 is enoyl-CoA hydratase/isomerase; the sequence is MIYQAETLQV…KIGLLDAVVD (189 aa). Residue Asp-296 participates in substrate binding. Residues 311–723 form a 3-hydroxyacyl-CoA dehydrogenase region; that stretch reads SKDTQRAAVL…FYGAQQQGSI (413 aa). Residues Met-325, Asp-344, 401–403, Lys-408, and Ser-430 contribute to the NAD(+) site; that span reads VVE. The active-site For 3-hydroxyacyl-CoA dehydrogenase activity is the His-451. An NAD(+)-binding site is contributed by Asn-454. Substrate is bound by residues Asn-501 and Tyr-661.

The protein in the N-terminal section; belongs to the enoyl-CoA hydratase/isomerase family. In the C-terminal section; belongs to the 3-hydroxyacyl-CoA dehydrogenase family. In terms of assembly, heterotetramer of two alpha chains (FadB) and two beta chains (FadA).

The enzyme catalyses a (3S)-3-hydroxyacyl-CoA + NAD(+) = a 3-oxoacyl-CoA + NADH + H(+). It catalyses the reaction a (3S)-3-hydroxyacyl-CoA = a (2E)-enoyl-CoA + H2O. It carries out the reaction a 4-saturated-(3S)-3-hydroxyacyl-CoA = a (3E)-enoyl-CoA + H2O. The catalysed reaction is (3S)-3-hydroxybutanoyl-CoA = (3R)-3-hydroxybutanoyl-CoA. The enzyme catalyses a (3Z)-enoyl-CoA = a 4-saturated (2E)-enoyl-CoA. It catalyses the reaction a (3E)-enoyl-CoA = a 4-saturated (2E)-enoyl-CoA. Its pathway is lipid metabolism; fatty acid beta-oxidation. Functionally, involved in the aerobic and anaerobic degradation of long-chain fatty acids via beta-oxidation cycle. Catalyzes the formation of 3-oxoacyl-CoA from enoyl-CoA via L-3-hydroxyacyl-CoA. It can also use D-3-hydroxyacyl-CoA and cis-3-enoyl-CoA as substrate. The polypeptide is Fatty acid oxidation complex subunit alpha (Vibrio campbellii (strain ATCC BAA-1116)).